A 426-amino-acid polypeptide reads, in one-letter code: L-ascorbate peroxidase T, chloroplastic (426 aa).

His112 (proton acceptor) is an active-site residue. A heme b-binding site is contributed by His241. Thr242 contributes to the K(+) binding site. Residues 245–269 form a disordered region; the sequence is RARPDRSGWGKPETKYTKTGPGEAG. Positions 246–260 are enriched in basic and acidic residues; it reads ARPDRSGWGKPETKY. 2 residues coordinate K(+): Thr274 and Asp281. Residues 397 to 417 form a helical membrane-spanning segment; sequence YFLNIIIAIGVLVLLSTLFGG.

It belongs to the peroxidase family. Ascorbate peroxidase subfamily. Requires heme b as cofactor.

Its subcellular location is the plastid. It is found in the chloroplast thylakoid membrane. The enzyme catalyses L-ascorbate + H2O2 = L-dehydroascorbate + 2 H2O. Plays a key role in hydrogen peroxide removal. The chain is L-ascorbate peroxidase T, chloroplastic (APXT) from Arabidopsis thaliana (Mouse-ear cress).